The following is a 324-amino-acid chain: Acetyl-coenzyme A carboxylase carboxyl transferase subunit alpha (324 aa).

Residues lysine 37–lysine 291 form the CoA carboxyltransferase C-terminal domain.

The protein belongs to the AccA family. Acetyl-CoA carboxylase is a heterohexamer composed of biotin carboxyl carrier protein (AccB), biotin carboxylase (AccC) and two subunits each of ACCase subunit alpha (AccA) and ACCase subunit beta (AccD).

The protein resides in the cytoplasm. It catalyses the reaction N(6)-carboxybiotinyl-L-lysyl-[protein] + acetyl-CoA = N(6)-biotinyl-L-lysyl-[protein] + malonyl-CoA. Its pathway is lipid metabolism; malonyl-CoA biosynthesis; malonyl-CoA from acetyl-CoA: step 1/1. In terms of biological role, component of the acetyl coenzyme A carboxylase (ACC) complex. First, biotin carboxylase catalyzes the carboxylation of biotin on its carrier protein (BCCP) and then the CO(2) group is transferred by the carboxyltransferase to acetyl-CoA to form malonyl-CoA. This Chlamydia trachomatis serovar L2 (strain ATCC VR-902B / DSM 19102 / 434/Bu) protein is Acetyl-coenzyme A carboxylase carboxyl transferase subunit alpha.